A 366-amino-acid chain; its full sequence is Ribosomal RNA small subunit methyltransferase H 1 (366 aa).

The interval 1–46 is disordered; it reads MADQNINKNEKVLTGQPTENQEPVHKRRERYKGTHPKTFKEKYKER. The segment covering 25–37 has biased composition (basic residues); it reads HKRRERYKGTHPK. S-adenosyl-L-methionine contacts are provided by residues 97 to 99, Asp-117, Phe-147, Asp-166, and Gln-173; that span reads GGH.

The protein belongs to the methyltransferase superfamily. RsmH family.

Its subcellular location is the cytoplasm. It catalyses the reaction cytidine(1402) in 16S rRNA + S-adenosyl-L-methionine = N(4)-methylcytidine(1402) in 16S rRNA + S-adenosyl-L-homocysteine + H(+). Functionally, specifically methylates the N4 position of cytidine in position 1402 (C1402) of 16S rRNA. The sequence is that of Ribosomal RNA small subunit methyltransferase H 1 from Lachnoclostridium phytofermentans (strain ATCC 700394 / DSM 18823 / ISDg) (Clostridium phytofermentans).